The sequence spans 203 residues: ESCRT-related protein CHMP1B (203 aa).

2 coiled-coil regions span residues D13–A51 and G109–A140. The segment at P172 to G203 is disordered. A compositionally biased stretch (basic and acidic residues) spans L192 to G203.

This sequence belongs to the SNF7 family. As to quaternary structure, interacts with CHMP1A and LIP5. Interacts with VPS2.2.

It localises to the cytoplasm. The protein localises to the endosome membrane. Its function is as follows. Involved in ESCRT-dependent multivesicular body (MVB) formation and sorting of endosomal cargo proteins into MVBs. Mediates the MVB sorting of the auxin carriers PIN1, PIN2 and AUX1. Required for embryonic axis establishment and seedling growth. Required for autophagic degradation of plastid proteins. Promotes the efficient sequestration of cargo from plastids into autophagosomes. Mediates the efficient delivery of autophagic plastid bodies to the vacuole, but not into the cytoplasm. This chain is ESCRT-related protein CHMP1B, found in Arabidopsis thaliana (Mouse-ear cress).